A 332-amino-acid polypeptide reads, in one-letter code: Invasin IpaD (332 aa).

Over residues 1 to 25 (MNITTLTNSISTSSFSPNNTNGSST) the composition is skewed to low complexity. Residues 1 to 43 (MNITTLTNSISTSSFSPNNTNGSSTETVNSDIKTTTSSHPVSS) form a disordered region. A compositionally biased stretch (polar residues) spans 26–43 (ETVNSDIKTTTSSHPVSS). Residues 44 to 77 (LTMLNDTLHNIRTTNQALKKELSQKTLTKTSLEE) are a coiled coil. The tract at residues 192–267 (VNSLKKALEE…KSLDNLGGNG (76 aa)) is ipaB binding.

The protein belongs to the invasin protein D family.

It localises to the secreted. Functionally, required for bacterial invasion of host cells. Controls IpaB and IpaC secretion, and the efficiency with which they are physically inserted into target cell membranes. These proteins are exported via T3SS to form a pore in the host membrane that allows the translocation of the other effectors into the host cytoplasm. Along with IpaB, is essential for both blocking secretion through the Mxi/Spa translocon in the absence of a secretion-inducing signal, and for controlling the level of secretion in the presence of this signal. This chain is Invasin IpaD (ipaD), found in Shigella flexneri.